Reading from the N-terminus, the 187-residue chain is Small ribosomal subunit protein uS7 (187 aa).

Belongs to the universal ribosomal protein uS7 family. In terms of assembly, part of the 30S ribosomal subunit.

Functionally, one of the primary rRNA binding proteins, it binds directly to 16S rRNA where it nucleates assembly of the head domain of the 30S subunit. Is located at the subunit interface close to the decoding center. This Methanosphaera stadtmanae (strain ATCC 43021 / DSM 3091 / JCM 11832 / MCB-3) protein is Small ribosomal subunit protein uS7.